A 203-amino-acid chain; its full sequence is Large ribosomal subunit protein bL25 (203 aa).

Belongs to the bacterial ribosomal protein bL25 family. CTC subfamily. As to quaternary structure, part of the 50S ribosomal subunit; part of the 5S rRNA/L5/L18/L25 subcomplex. Contacts the 5S rRNA. Binds to the 5S rRNA independently of L5 and L18.

This is one of the proteins that binds to the 5S RNA in the ribosome where it forms part of the central protuberance. The chain is Large ribosomal subunit protein bL25 from Chlorobium phaeovibrioides (strain DSM 265 / 1930) (Prosthecochloris vibrioformis (strain DSM 265)).